A 182-amino-acid polypeptide reads, in one-letter code: Meiotic recombination protein REC104 (182 aa).

Interacts with REC114 and SPO11.

Potential transcriptional regulator that is required to activate expression of a number of early meiotic genes including HOP1. The polypeptide is Meiotic recombination protein REC104 (REC104) (Saccharomyces cerevisiae (strain ATCC 204508 / S288c) (Baker's yeast)).